The sequence spans 1488 residues: Chromosome partition protein MukB (1488 aa).

Residue 34 to 41 participates in ATP binding; sequence GGNGAGKS. Coiled coils occupy residues 326–418, 444–472, and 509–602; these read LEAD…QYNQ, LDTF…QTAH, and RHLA…QRAP. The flexible hinge stretch occupies residues 666–783; it reads PGGAEDQRLN…SLPIFGRAAR (118 aa). Coiled-coil stretches lie at residues 835-923, 977-1116, and 1209-1265; these read EAEI…AKLE, EMLS…AKAG, and VEAI…LQSV.

This sequence belongs to the SMC family. MukB subfamily. Homodimerization via its hinge domain. Binds to DNA via its C-terminal region. Interacts, and probably forms a ternary complex, with MukE and MukF via its C-terminal region. The complex formation is stimulated by calcium or magnesium. Interacts with tubulin-related protein FtsZ.

It localises to the cytoplasm. The protein localises to the nucleoid. Its function is as follows. Plays a central role in chromosome condensation, segregation and cell cycle progression. Functions as a homodimer, which is essential for chromosome partition. Involved in negative DNA supercoiling in vivo, and by this means organize and compact chromosomes. May achieve or facilitate chromosome segregation by condensation DNA from both sides of a centrally located replisome during cell division. The polypeptide is Chromosome partition protein MukB (Salmonella paratyphi B (strain ATCC BAA-1250 / SPB7)).